Here is a 344-residue protein sequence, read N- to C-terminus: N-acetyl-gamma-glutamyl-phosphate reductase (344 aa).

The active site involves Cys-148.

It belongs to the NAGSA dehydrogenase family. Type 1 subfamily.

The protein resides in the cytoplasm. The catalysed reaction is N-acetyl-L-glutamate 5-semialdehyde + phosphate + NADP(+) = N-acetyl-L-glutamyl 5-phosphate + NADPH + H(+). It functions in the pathway amino-acid biosynthesis; L-arginine biosynthesis; N(2)-acetyl-L-ornithine from L-glutamate: step 3/4. Catalyzes the NADPH-dependent reduction of N-acetyl-5-glutamyl phosphate to yield N-acetyl-L-glutamate 5-semialdehyde. The polypeptide is N-acetyl-gamma-glutamyl-phosphate reductase (Geobacillus thermodenitrificans (strain NG80-2)).